The sequence spans 466 residues: 3-isopropylmalate dehydratase large subunit (466 aa).

[4Fe-4S] cluster is bound by residues C347, C407, and C410.

It belongs to the aconitase/IPM isomerase family. LeuC type 1 subfamily. Heterodimer of LeuC and LeuD. The cofactor is [4Fe-4S] cluster.

It carries out the reaction (2R,3S)-3-isopropylmalate = (2S)-2-isopropylmalate. The protein operates within amino-acid biosynthesis; L-leucine biosynthesis; L-leucine from 3-methyl-2-oxobutanoate: step 2/4. Catalyzes the isomerization between 2-isopropylmalate and 3-isopropylmalate, via the formation of 2-isopropylmaleate. The sequence is that of 3-isopropylmalate dehydratase large subunit from Salmonella paratyphi A (strain ATCC 9150 / SARB42).